We begin with the raw amino-acid sequence, 776 residues long: Systemic RNA interference defective protein 1 (776 aa).

Positions 1 to 17 are cleaved as a signal peptide; that stretch reads MIRVYLIILMHLVIGLT. Residues 18–319 are Extracellular-facing; the sequence is QNNSTTPSPI…ENQSYAVPTA (302 aa). Asn-19, Asn-20, Asn-32, Asn-205, Asn-210, Asn-234, Asn-290, and Asn-311 each carry an N-linked (GlcNAc...) asparagine glycan. The involved in dsRNA-binding stretch occupies residues 22–312; that stretch reads TTPSPIITSS…SFEFKKLENQ (291 aa). The helical transmembrane segment at 320–340 threads the bilayer; that stretch reads LMMIFLTTPCLLFLPIVINII. Residues 341–429 lie on the Cytoplasmic side of the membrane; that stretch reads KNSRKLAPSQ…KQDSLSLHGQ (89 aa). Residues 360–390 form a disordered region; it reads PSEQRDMDLSHDEQQNTSSELENNGEIPAAE. Basic and acidic residues predominate over residues 362 to 373; the sequence is EQRDMDLSHDEQ. A helical transmembrane segment spans residues 430-450; sequence MLQYPVAIILPVLMHTAIEFH. The Extracellular segment spans residues 451–481; it reads KWTTSTMANRDEMCFHNHACARPLGELRAWN. The helical transmembrane segment at 482–502 threads the bilayer; that stretch reads NIITNIGYTLYGAIFIVLSIC. Topologically, residues 503-510 are cytoplasmic; it reads RRGRHEYS. The helical transmembrane segment at 511 to 531 threads the bilayer; the sequence is HVFGTYECTLLDVTIGVFMVL. Residues 532–543 lie on the Extracellular side of the membrane; sequence QSIASATYHICP. Residues 544-564 traverse the membrane as a helical segment; sequence SDVAFQFDTPCIQVICGLLMV. Over 565 to 575 the chain is Cytoplasmic; the sequence is RQWFVRHESPS. The helical transmembrane segment at 576–596 threads the bilayer; the sequence is PAYTNILLVGVVSLNFLISAF. At 597–599 the chain is on the extracellular side; the sequence is SKT. Residues 600–620 traverse the membrane as a helical segment; that stretch reads SYVRFIIAVIHVIVVGSICLA. The Cytoplasmic portion of the chain corresponds to 621–633; that stretch reads KERSLGSEKLKTR. The chain crosses the membrane as a helical span at residues 634-654; it reads FFIMAFSMGNFAAIVMYLTLS. The Extracellular segment spans residues 655 to 659; it reads AFHLN. The chain crosses the membrane as a helical span at residues 660 to 680; it reads QIATYCFIINCIMYLMYYGCM. Topologically, residues 681–691 are cytoplasmic; the sequence is KVLHSERITSK. A helical membrane pass occupies residues 692 to 712; the sequence is AKLCGALSLLAWAVAGFFFFQ. Residues 713 to 741 are Extracellular-facing; that stretch reads DDTDWTRSAAASRALNKPCLLLGFFGSHD. The chain crosses the membrane as a helical span at residues 742–762; sequence LWHIFGALAGLFTFIFVSFVD. The Cytoplasmic portion of the chain corresponds to 763–776; that stretch reads DDLINTRKTSINIF.

It belongs to the SID1 family. In terms of assembly, may self-associate to form multimers. In terms of tissue distribution, expressed in most non-neuronal cells, including body wall muscle cells.

The protein resides in the cell membrane. Plays a role in RNA-mediated gene silencing by acting cell-autonomously as a channel for the transport of double-stranded RNA (dsRNA) between cells. Mediates the spread of dsRNA and subsequent silencing of genes in cells distant from the site of dsRNA introduction. Selective for dsRNA. Preferentially binds long dsRNA, from 50 base pairs up to 700. Short 20 base-pair long molecules are not bound. May also bind dsDNA, but with lower affinity. Binding may be sequence-independent. Required for avoidance behavior induced by small RNAs derived from pathogenic bacteria such as P.aeruginosa. The protein is Systemic RNA interference defective protein 1 of Caenorhabditis elegans.